A 1004-amino-acid polypeptide reads, in one-letter code: 2-oxoglutarate dehydrogenase E1 component (1004 aa).

This sequence belongs to the alpha-ketoglutarate dehydrogenase family. Homodimer. Part of the 2-oxoglutarate dehydrogenase (OGDH) complex composed of E1 (2-oxoglutarate dehydrogenase), E2 (dihydrolipoamide succinyltransferase) and E3 (dihydrolipoamide dehydrogenase); the complex contains multiple copies of the three enzymatic components (E1, E2 and E3). Thiamine diphosphate is required as a cofactor.

The catalysed reaction is N(6)-[(R)-lipoyl]-L-lysyl-[protein] + 2-oxoglutarate + H(+) = N(6)-[(R)-S(8)-succinyldihydrolipoyl]-L-lysyl-[protein] + CO2. E1 component of the 2-oxoglutarate dehydrogenase (OGDH) complex which catalyzes the decarboxylation of 2-oxoglutarate, the first step in the conversion of 2-oxoglutarate to succinyl-CoA and CO(2). The protein is 2-oxoglutarate dehydrogenase E1 component of Brucella melitensis biotype 2 (strain ATCC 23457).